The primary structure comprises 538 residues: Chaperonin GroEL (538 aa).

Residues 29–32 (TLGP), 86–90 (DGTTT), G413, 476–478 (NAA), and D492 contribute to the ATP site.

It belongs to the chaperonin (HSP60) family. In terms of assembly, forms a cylinder of 14 subunits composed of two heptameric rings stacked back-to-back. Interacts with the co-chaperonin GroES.

The protein localises to the cytoplasm. It catalyses the reaction ATP + H2O + a folded polypeptide = ADP + phosphate + an unfolded polypeptide.. Together with its co-chaperonin GroES, plays an essential role in assisting protein folding. The GroEL-GroES system forms a nano-cage that allows encapsulation of the non-native substrate proteins and provides a physical environment optimized to promote and accelerate protein folding. This Bacillus sp. (strain PS3) protein is Chaperonin GroEL.